Here is a 475-residue protein sequence, read N- to C-terminus: Ribulose bisphosphate carboxylase large chain (475 aa).

The propeptide occupies 1–2; the sequence is MS. Proline 3 carries the post-translational modification N-acetylproline. N6,N6,N6-trimethyllysine is present on lysine 14. Substrate contacts are provided by asparagine 123 and threonine 173. Lysine 175 acts as the Proton acceptor in catalysis. Lysine 177 contributes to the substrate binding site. Residues lysine 201, aspartate 203, and glutamate 204 each coordinate Mg(2+). Residue lysine 201 is modified to N6-carboxylysine. Residue histidine 294 is the Proton acceptor of the active site. Arginine 295, histidine 327, and serine 379 together coordinate substrate.

This sequence belongs to the RuBisCO large chain family. Type I subfamily. In terms of assembly, heterohexadecamer of 8 large chains and 8 small chains; disulfide-linked. The disulfide link is formed within the large subunit homodimers. The cofactor is Mg(2+). Post-translationally, the disulfide bond which can form in the large chain dimeric partners within the hexadecamer appears to be associated with oxidative stress and protein turnover.

Its subcellular location is the plastid. The protein resides in the chloroplast. The enzyme catalyses 2 (2R)-3-phosphoglycerate + 2 H(+) = D-ribulose 1,5-bisphosphate + CO2 + H2O. The catalysed reaction is D-ribulose 1,5-bisphosphate + O2 = 2-phosphoglycolate + (2R)-3-phosphoglycerate + 2 H(+). RuBisCO catalyzes two reactions: the carboxylation of D-ribulose 1,5-bisphosphate, the primary event in carbon dioxide fixation, as well as the oxidative fragmentation of the pentose substrate in the photorespiration process. Both reactions occur simultaneously and in competition at the same active site. This is Ribulose bisphosphate carboxylase large chain from Quercus rubra (Northern red oak).